A 92-amino-acid chain; its full sequence is Protein 10 (92 aa).

The region spanning phenylalanine 18–histidine 29 is the EF-hand domain.

The protein belongs to the calbindin family. As to expression, brain.

This Cavia porcellus (Guinea pig) protein is Protein 10.